The sequence spans 587 residues: Aspartate--tRNA ligase (587 aa).

Residue glutamate 174 coordinates L-aspartate. An aspartate region spans residues 198-201 (QITK). Residue arginine 220 coordinates L-aspartate. Residues 220-222 (RDE) and glutamine 229 each bind ATP. Residue histidine 443 coordinates L-aspartate. Glutamate 477 serves as a coordination point for ATP. An L-aspartate-binding site is contributed by arginine 484. Position 529 to 532 (529 to 532 (GLDR)) interacts with ATP.

The protein belongs to the class-II aminoacyl-tRNA synthetase family. Type 1 subfamily. Homodimer.

It localises to the cytoplasm. It carries out the reaction tRNA(Asp) + L-aspartate + ATP = L-aspartyl-tRNA(Asp) + AMP + diphosphate. Catalyzes the attachment of L-aspartate to tRNA(Asp) in a two-step reaction: L-aspartate is first activated by ATP to form Asp-AMP and then transferred to the acceptor end of tRNA(Asp). The sequence is that of Aspartate--tRNA ligase from Streptococcus pneumoniae (strain 70585).